The chain runs to 660 residues: Methionine--tRNA ligase (660 aa).

The 'HIGH' region motif lies at 15–25 (YYPSDKLHIGH). Positions 311–315 (KMSKS) match the 'KMSKS' region motif. An ATP-binding site is contributed by K314. Residues 535 to 554 (LMGGSKKPEEAPKDEKEESD) form a disordered region. Over residues 540 to 550 (KKPEEAPKDEK) the composition is skewed to basic and acidic residues. A tRNA-binding domain is found at 560–660 (DFSKVELRIA…GALPNGSLVK (101 aa)).

Belongs to the class-I aminoacyl-tRNA synthetase family. MetG type 2B subfamily. As to quaternary structure, homodimer.

Its subcellular location is the cytoplasm. It carries out the reaction tRNA(Met) + L-methionine + ATP = L-methionyl-tRNA(Met) + AMP + diphosphate. Is required not only for elongation of protein synthesis but also for the initiation of all mRNA translation through initiator tRNA(fMet) aminoacylation. This chain is Methionine--tRNA ligase (metG), found in Halalkalibacterium halodurans (strain ATCC BAA-125 / DSM 18197 / FERM 7344 / JCM 9153 / C-125) (Bacillus halodurans).